The following is a 437-amino-acid chain: Xylose isomerase (437 aa).

Active-site residues include histidine 101 and aspartate 104. Positions 232, 268, 271, 296, 307, 309, and 339 each coordinate Mg(2+).

The protein belongs to the xylose isomerase family. As to quaternary structure, homotetramer. The cofactor is Mg(2+).

The protein localises to the cytoplasm. It carries out the reaction alpha-D-xylose = alpha-D-xylulofuranose. The sequence is that of Xylose isomerase from Actinobacillus succinogenes (strain ATCC 55618 / DSM 22257 / CCUG 43843 / 130Z).